Here is a 195-residue protein sequence, read N- to C-terminus: Erythropoietin (195 aa).

The signal sequence occupies residues 1–28; sequence MGVRGRLALLPLALLCLLVLALGLPVLG. 2 disulfides stabilise this stretch: cysteine 35–cysteine 190 and cysteine 57–cysteine 61. N-linked (GlcNAc...) asparagine glycosylation is present at asparagine 52. N-linked (GlcNAc...) asparagine glycans are attached at residues asparagine 66 and asparagine 111.

The protein belongs to the EPO/TPO family.

The protein resides in the secreted. In terms of biological role, hormone involved in the regulation of erythrocyte proliferation and differentiation and the maintenance of a physiological level of circulating erythrocyte mass. Binds to EPOR leading to EPOR dimerization and JAK2 activation thereby activating specific downstream effectors, including STAT1 and STAT3. The protein is Erythropoietin (EPO) of Oryctolagus cuniculus (Rabbit).